A 371-amino-acid chain; its full sequence is Gustatory and pheromone receptor 39a, isoform A (371 aa).

The Cytoplasmic portion of the chain corresponds to 1 to 41; that stretch reads MSKVCRDLRIYLRLLHIMGMMCWHFDSDHCQLVATSGSERY. A helical membrane pass occupies residues 42–62; it reads AVVYAGCILVSTTAGFIFALL. Residues 63–80 lie on the Extracellular side of the membrane; it reads HPSRFHIAIYNQTGNFYE. N73 is a glycosylation site (N-linked (GlcNAc...) asparagine). Residues 81-101 form a helical membrane-spanning segment; the sequence is AVIFRSTCVVLFLVYVILYAW. At 102–127 the chain is on the cytoplasmic side; the sequence is RHRYRDLVQHILRLNRRCASSCTNQQ. A helical transmembrane segment spans residues 128-148; sequence FLHNIILYGMLTILCFGNYLH. At 149-161 the chain is on the extracellular side; sequence GYTRAGLATLPLA. The chain crosses the membrane as a helical span at residues 162 to 182; the sequence is LCMLVYIFAFLVLCLLLMFFV. The Cytoplasmic segment spans residues 183-228; sequence SLKQVMTAGLIHYNQQLCQGDLISGLRGRQQILKLCGGELNECFGL. A helical transmembrane segment spans residues 229–249; it reads LMLPIVALVLLMAPSGPFFLI. The Extracellular segment spans residues 250–263; it reads STVLEGKFRPDECL. The helical transmembrane segment at 264–284 threads the bilayer; the sequence is IMLLTSSTWDTPWMIMLVLML. Residues 285 to 340 lie on the Cytoplasmic side of the membrane; the sequence is RTNGISEEANKTAKMLTKVPRTGTGLDRMIEKFLLKNLRQKPILTAYGFFALDKST. Residues 341-361 traverse the membrane as a helical segment; it reads LFKLFTAIFTYMVILVQFKEM. At 362-371 the chain is on the extracellular side; that stretch reads ENSTKSINKF. N363 carries N-linked (GlcNAc...) asparagine glycosylation.

It belongs to the insect chemoreceptor superfamily. Gustatory receptor (GR) family. Gr21a subfamily. As to expression, expressed in the adult labellar chemosensory neurons, and adult thorax and wing. In larvae, is expressed in neurons of the posterior pharyngeal sense organ.

It localises to the cell membrane. Gustatory receptor which mediates acceptance or avoidance behavior, depending on its substrates. Plays a role in sustaining courtship behavior in males, possibly through the reception of a stimulating arrestant pheromone. This is Gustatory and pheromone receptor 39a, isoform A (Gr39a) from Drosophila melanogaster (Fruit fly).